Here is a 244-residue protein sequence, read N- to C-terminus: Phosphoadenosine 5'-phosphosulfate reductase (244 aa).

The Nucleophile; cysteine thiosulfonate intermediate role is filled by cysteine 239.

Belongs to the PAPS reductase family. CysH subfamily.

The protein resides in the cytoplasm. The catalysed reaction is [thioredoxin]-disulfide + sulfite + adenosine 3',5'-bisphosphate + 2 H(+) = [thioredoxin]-dithiol + 3'-phosphoadenylyl sulfate. Its pathway is sulfur metabolism; hydrogen sulfide biosynthesis; sulfite from sulfate: step 3/3. Functionally, catalyzes the formation of sulfite from phosphoadenosine 5'-phosphosulfate (PAPS) using thioredoxin as an electron donor. The protein is Phosphoadenosine 5'-phosphosulfate reductase of Salmonella newport (strain SL254).